The following is a 131-amino-acid chain: Small ribosomal subunit protein uS11 (131 aa).

This sequence belongs to the universal ribosomal protein uS11 family. Part of the 30S ribosomal subunit. Interacts with proteins S7 and S18. Binds to IF-3.

Its function is as follows. Located on the platform of the 30S subunit, it bridges several disparate RNA helices of the 16S rRNA. Forms part of the Shine-Dalgarno cleft in the 70S ribosome. In Cellvibrio japonicus (strain Ueda107) (Pseudomonas fluorescens subsp. cellulosa), this protein is Small ribosomal subunit protein uS11.